The following is a 78-amino-acid chain: DNA-directed RNA polymerase subunit Rpo5 (78 aa).

The protein belongs to the archaeal Rpo5/eukaryotic RPB5 RNA polymerase subunit family. As to quaternary structure, part of the RNA polymerase complex.

It localises to the cytoplasm. It carries out the reaction RNA(n) + a ribonucleoside 5'-triphosphate = RNA(n+1) + diphosphate. Functionally, DNA-dependent RNA polymerase (RNAP) catalyzes the transcription of DNA into RNA using the four ribonucleoside triphosphates as substrates. The chain is DNA-directed RNA polymerase subunit Rpo5 from Methanosarcina mazei (strain ATCC BAA-159 / DSM 3647 / Goe1 / Go1 / JCM 11833 / OCM 88) (Methanosarcina frisia).